The following is a 163-amino-acid chain: Nucleotide-binding protein BcerKBAB4_1061 (163 aa).

It belongs to the YajQ family.

Its function is as follows. Nucleotide-binding protein. The sequence is that of Nucleotide-binding protein BcerKBAB4_1061 from Bacillus mycoides (strain KBAB4) (Bacillus weihenstephanensis).